A 682-amino-acid polypeptide reads, in one-letter code: MSRKQLALFEPTLVVQALKEAVKKLNPQAQWRNPVMFIVWIGSLLTTCISIAMASGAMPGNALFSAAISGWLWVTVLFANFAEALAEGRSKAQANSLKGVKKTAFARKLREPKYGAAADKVPADQLRKGDIVLVEAGDIIPCDGEVIEGGASVDESAITGESAPVIRESGGDFASVTGGTRILSDWLVIECSVNPGETFLDRMIAMVEGAQRRKTPNEIALTILLIALTIVFLLATATLWPFSAWGGNAVSVTVLVALLVCLIPTTIGGLLSAIGVAGMSRMLGANVIATSGRAVEAAGDVDVLLLDKTGTITLGNRQASEFIPAQGVDEKTLADAAQLASLADETPEGRSIVILAKQRFNLRERDVQSLHATFVPFTAQSRMSGINIDNRMIRKGSVDAIRRHIEANGGHFPTDVDQKVDQVARQGATPLVVVEGSRVLGVIALKDIVKGGIKERFAQLRQMGIKTVMITGDNRLTAAAIAAEAGVDDFLAEATPEAKLALIRQYQAEGRLVAMTGDGTNDAPALAQADVAVAMNSGTQAAKEAGNMVDLDSNPTKLIEVVHIGKQMLMTRGSLTTFSIANDVAKYFAIIPAAFAATYPQLNALNIMRLHSPDSAILSAVIFNALIIVFLIPLALKGVSYKPLTASAMLRRNLWIYGLGGLLVPFIGIKVIDLLLTVCGLV.

4 helical membrane passes run 34–54 (PVMFIVWIGSLLTTCISIAMA), 62–82 (ALFSAAISGWLWVTVLFANFA), 219–239 (IALTILLIALTIVFLLATATL), and 254–274 (VLVALLVCLIPTTIGGLLSAI). The active-site 4-aspartylphosphate intermediate is the Asp307. ATP contacts are provided by residues Asp344, Glu348, 377–384 (FTAQSRMS), and Lys395. Asp518 and Asp522 together coordinate Mg(2+). 3 helical membrane passes run 588–608 (FAIIPAAFAATYPQLNALNIM), 616–636 (AILSAVIFNALIIVFLIPLAL), and 656–676 (IYGLGGLLVPFIGIKVIDLLL).

The protein belongs to the cation transport ATPase (P-type) (TC 3.A.3) family. Type IA subfamily. In terms of assembly, the system is composed of three essential subunits: KdpA, KdpB and KdpC.

It localises to the cell inner membrane. The enzyme catalyses K(+)(out) + ATP + H2O = K(+)(in) + ADP + phosphate + H(+). In terms of biological role, part of the high-affinity ATP-driven potassium transport (or Kdp) system, which catalyzes the hydrolysis of ATP coupled with the electrogenic transport of potassium into the cytoplasm. This subunit is responsible for energy coupling to the transport system and for the release of the potassium ions to the cytoplasm. The chain is Potassium-transporting ATPase ATP-binding subunit from Escherichia coli O8 (strain IAI1).